The sequence spans 144 residues: Large ribosomal subunit protein uL11 (144 aa).

The protein belongs to the universal ribosomal protein uL11 family. In terms of assembly, part of the ribosomal stalk of the 50S ribosomal subunit. Interacts with L10 and the large rRNA to form the base of the stalk. L10 forms an elongated spine to which L12 dimers bind in a sequential fashion forming a multimeric L10(L12)X complex. One or more lysine residues are methylated.

Functionally, forms part of the ribosomal stalk which helps the ribosome interact with GTP-bound translation factors. This chain is Large ribosomal subunit protein uL11, found in Francisella tularensis subsp. mediasiatica (strain FSC147).